A 235-amino-acid chain; its full sequence is Orotidine 5'-phosphate decarboxylase (235 aa).

Residues Asp-17, Lys-39, 66–75 (DLKLHDIGNT), Thr-121, Arg-182, Gln-191, Gly-211, and Arg-212 each bind substrate. Residue Lys-68 is the Proton donor of the active site.

The protein belongs to the OMP decarboxylase family. Type 1 subfamily. In terms of assembly, homodimer.

It catalyses the reaction orotidine 5'-phosphate + H(+) = UMP + CO2. It participates in pyrimidine metabolism; UMP biosynthesis via de novo pathway; UMP from orotate: step 2/2. Catalyzes the decarboxylation of orotidine 5'-monophosphate (OMP) to uridine 5'-monophosphate (UMP). The sequence is that of Orotidine 5'-phosphate decarboxylase from Afipia carboxidovorans (strain ATCC 49405 / DSM 1227 / KCTC 32145 / OM5) (Oligotropha carboxidovorans).